Consider the following 512-residue polypeptide: Metal transporter Nramp4 (512 aa).

Transmembrane regions (helical) follow at residues 52 to 72, 80 to 100, 129 to 149, 161 to 181, 189 to 209, 235 to 255, 277 to 297, 323 to 343, 371 to 391, 402 to 422, 440 to 460, and 468 to 488; these read LWLF…PGNL, AIAG…GLLI, MVLW…EVIG, LVPL…FLFL, LEAV…WMFG, AVGI…SALV, IEST…TTVF, YGGG…AAGQ, ALIT…VFDS, WLNV…LCLV, ISWI…VDFF, and ILLV…LYLI.

Belongs to the NRAMP (TC 2.A.55) family. In terms of tissue distribution, expressed in vascular tissues.

It is found in the vacuole membrane. In terms of biological role, vacuolar metal transporter involved in intracellular metal homeostasis. Can transport iron (Fe), manganese (Mn) and cadmium (Cd). Regulates metal accumulation under Fe starvation. Acts redundantly with NRAMP3 to mobilize vacuolar Fe and provide sufficient Fe during seed germination. In association with NRAMP3, required for optimal growth and photosynthesis under Mn deficiency. Exports Mn from vacuoles in leaf mesophyll cells, making Mn available for functional photosystem II in chloroplasts. This is Metal transporter Nramp4 (NRAMP4) from Arabidopsis thaliana (Mouse-ear cress).